A 201-amino-acid chain; its full sequence is Pyridoxal 5'-phosphate synthase subunit PdxT (201 aa).

49-51 (GES) is an L-glutamine binding site. Cys-81 serves as the catalytic Nucleophile. L-glutamine contacts are provided by residues Arg-110 and 139-140 (IR). Residues His-175 and Glu-177 each act as charge relay system in the active site.

It belongs to the glutaminase PdxT/SNO family. As to quaternary structure, in the presence of PdxS, forms a dodecamer of heterodimers. Only shows activity in the heterodimer.

It carries out the reaction aldehydo-D-ribose 5-phosphate + D-glyceraldehyde 3-phosphate + L-glutamine = pyridoxal 5'-phosphate + L-glutamate + phosphate + 3 H2O + H(+). The enzyme catalyses L-glutamine + H2O = L-glutamate + NH4(+). It functions in the pathway cofactor biosynthesis; pyridoxal 5'-phosphate biosynthesis. In terms of biological role, catalyzes the hydrolysis of glutamine to glutamate and ammonia as part of the biosynthesis of pyridoxal 5'-phosphate. The resulting ammonia molecule is channeled to the active site of PdxS. The sequence is that of Pyridoxal 5'-phosphate synthase subunit PdxT from Streptomyces avermitilis (strain ATCC 31267 / DSM 46492 / JCM 5070 / NBRC 14893 / NCIMB 12804 / NRRL 8165 / MA-4680).